The primary structure comprises 700 residues: ATP-dependent zinc metalloprotease FtsH (700 aa).

Topologically, residues 1–10 are cytoplasmic; it reads MNNNKGGFLR. Residues 11 to 31 form a helical membrane-spanning segment; the sequence is SSVFYIFIFLAVVGMVYGLFG. Over 32-130 the chain is Extracellular; that stretch reads NDKTTTKTIT…LVTKQAENSG (99 aa). A helical membrane pass occupies residues 131-151; the sequence is FWLNLLVSLVPVLLIVAVFYL. Residues 152–700 are Cytoplasmic-facing; that stretch reads MMNQAGGGKG…ETDDNNTENK (549 aa). 227-234 contacts ATP; it reads GPPGTGKT. H449 serves as a coordination point for Zn(2+). Residue E450 is part of the active site. Zn(2+) is bound by residues H453 and D525. Residues 644 to 700 are disordered; it reads KSFEEAKAAADAKDSQAEQRFEKQDEEKSSDDHSESKNEDTDSTDKSETDDNNTENK.

This sequence in the central section; belongs to the AAA ATPase family. It in the C-terminal section; belongs to the peptidase M41 family. As to quaternary structure, homohexamer. The cofactor is Zn(2+).

Its subcellular location is the cell membrane. In terms of biological role, acts as a processive, ATP-dependent zinc metallopeptidase for both cytoplasmic and membrane proteins. Plays a role in the quality control of integral membrane proteins. This chain is ATP-dependent zinc metalloprotease FtsH, found in Leuconostoc mesenteroides subsp. mesenteroides (strain ATCC 8293 / DSM 20343 / BCRC 11652 / CCM 1803 / JCM 6124 / NCDO 523 / NBRC 100496 / NCIMB 8023 / NCTC 12954 / NRRL B-1118 / 37Y).